Reading from the N-terminus, the 240-residue chain is Tetrahydromethanopterin S-methyltransferase subunit A (240 aa).

Residues M1–K218 are Cytoplasmic-facing. Residue H85 participates in 5-hydroxybenzimidazolylcob(I)amide binding. A helical transmembrane segment spans residues F219–G239. R240 is a topological domain (extracellular).

The protein belongs to the MtrA family. The complex is composed of 8 subunits; MtrA, MtrB, MtrC, MtrD, MtrE, MtrF, MtrG and MtrH. The cofactor is 5-hydroxybenzimidazolylcob(I)amide.

It localises to the cell membrane. It carries out the reaction 5-methyl-5,6,7,8-tetrahydromethanopterin + coenzyme M + 2 Na(+)(in) = 5,6,7,8-tetrahydromethanopterin + methyl-coenzyme M + 2 Na(+)(out). It functions in the pathway one-carbon metabolism; methanogenesis from CO(2); methyl-coenzyme M from 5,10-methylene-5,6,7,8-tetrahydromethanopterin: step 2/2. Part of a complex that catalyzes the formation of methyl-coenzyme M and tetrahydromethanopterin from coenzyme M and methyl-tetrahydromethanopterin. This is an energy-conserving, sodium-ion translocating step. This is Tetrahydromethanopterin S-methyltransferase subunit A from Methanohalophilus mahii (strain ATCC 35705 / DSM 5219 / SLP).